We begin with the raw amino-acid sequence, 205 residues long: Holliday junction branch migration complex subunit RuvA (205 aa).

The interval 1–64 is domain I; the sequence is MIGKLKGIID…EDQIKLFGFR (64 aa). A domain II region spans residues 65–143; sequence TDTEREWFRL…ALSAVDPAVV (79 aa). The tract at residues 144–154 is flexible linker; it reads KLSGAIDDNRA. A domain III region spans residues 154 to 205; that stretch reads APRAVTDAISALVNLGYGQPQAAAAVATASRTAGEDAETAQLIKLGLKELSK.

Belongs to the RuvA family. In terms of assembly, homotetramer. Forms an RuvA(8)-RuvB(12)-Holliday junction (HJ) complex. HJ DNA is sandwiched between 2 RuvA tetramers; dsDNA enters through RuvA and exits via RuvB. An RuvB hexamer assembles on each DNA strand where it exits the tetramer. Each RuvB hexamer is contacted by two RuvA subunits (via domain III) on 2 adjacent RuvB subunits; this complex drives branch migration. In the full resolvosome a probable DNA-RuvA(4)-RuvB(12)-RuvC(2) complex forms which resolves the HJ.

The protein resides in the cytoplasm. Its function is as follows. The RuvA-RuvB-RuvC complex processes Holliday junction (HJ) DNA during genetic recombination and DNA repair, while the RuvA-RuvB complex plays an important role in the rescue of blocked DNA replication forks via replication fork reversal (RFR). RuvA specifically binds to HJ cruciform DNA, conferring on it an open structure. The RuvB hexamer acts as an ATP-dependent pump, pulling dsDNA into and through the RuvAB complex. HJ branch migration allows RuvC to scan DNA until it finds its consensus sequence, where it cleaves and resolves the cruciform DNA. The polypeptide is Holliday junction branch migration complex subunit RuvA (Rhodopseudomonas palustris (strain TIE-1)).